Reading from the N-terminus, the 625-residue chain is Vacuolar-sorting receptor 7 (625 aa).

Positions 1-26 (MGLVNGRASLTFLLAALTIIAMVVEA) are cleaved as a signal peptide. The Lumenal segment spans residues 27–564 (RFVVEKESIS…CIERYGSKTA (538 aa)). In terms of domain architecture, PA spans 58-166 (DYGGFLIGSV…SFGDDLRQGF (109 aa)). 3 N-linked (GlcNAc...) asparagine glycosylation sites follow: N292, N400, and N432. 2 consecutive EGF-like domains span residues 414–464 (ETNE…TSCT) and 467–513 (GPAR…LTCE). 7 disulfide bridges follow: C418–C436, C425–C445, C447–C463, C471–C491, C478–C499, C501–C512, and C542–C555. The EGF-like 3; calcium-binding domain occupies 514-556 (DINECKERSVCQCSGCRCKNSWGGYKCSCSGDRLYINDQDTCI). The helical transmembrane segment at 565–585 (WWLTFLILAIVAVAGLAGYIF) threads the bilayer. The Cytoplasmic portion of the chain corresponds to 586–625 (YKYRFRSYMDSEIMTIMSQYMPLESQRAREVPSEAEPFTL). Positions 605 to 608 (YMPL) match the Tyrosine-based internalization motif motif.

This sequence belongs to the VSR (BP-80) family. As to expression, expressed at low levels in seedlings, roots, young leaves, flowers and siliques.

The protein resides in the golgi apparatus membrane. Functionally, vacuolar-sorting receptor (VSR) involved in clathrin-coated vesicles sorting from Golgi apparatus to vacuoles. This chain is Vacuolar-sorting receptor 7 (VSR7), found in Arabidopsis thaliana (Mouse-ear cress).